A 170-amino-acid polypeptide reads, in one-letter code: MRTLLRWCLFLSLCVSCACAFMFSSMREKTKESPGKVPCGGHFRIRQNLPENAQGWLGNKWLWLFVAIMIYVMLKFRGDGENKEQHPPGLRGCQLRSPPKKAQNISPSKDFTFNTLTQLEMELVKFVSKVRNLKVSMATNSNSRQQVPESPTNLYNNVTIYEIWGEEDSE.

The N-terminal stretch at 1–20 (MRTLLRWCLFLSLCVSCACA) is a signal peptide. Residues 56 to 76 (WLGNKWLWLFVAIMIYVMLKF) form a helical membrane-spanning segment. The tract at residues 83-107 (KEQHPPGLRGCQLRSPPKKAQNISP) is disordered.

In terms of assembly, interacts with DPY19L2. Interacts with CYLC1; the interaction may be relevant for proper acrosome attachment to the nuclear envelope. As to expression, predominately expressed in testis.

The protein resides in the nucleus inner membrane. Functionally, required for sperm acrosome biogenesis. The polypeptide is Protein FAM209 (Mus musculus (Mouse)).